We begin with the raw amino-acid sequence, 382 residues long: Dual-specificity RNA methyltransferase RlmN (382 aa).

Glu94 serves as the catalytic Proton acceptor. One can recognise a Radical SAM core domain in the interval 100-336 (EANRGTLCVS…NTITRKTRGD (237 aa)). Cys107 and Cys342 form a disulfide bridge. Positions 114, 118, and 121 each coordinate [4Fe-4S] cluster. Residues 168–169 (GE), Ser200, 222–224 (SLH), and Asn299 each bind S-adenosyl-L-methionine. Residue Cys342 is the S-methylcysteine intermediate of the active site.

This sequence belongs to the radical SAM superfamily. RlmN family. Requires [4Fe-4S] cluster as cofactor.

The protein localises to the cytoplasm. It catalyses the reaction adenosine(2503) in 23S rRNA + 2 reduced [2Fe-2S]-[ferredoxin] + 2 S-adenosyl-L-methionine = 2-methyladenosine(2503) in 23S rRNA + 5'-deoxyadenosine + L-methionine + 2 oxidized [2Fe-2S]-[ferredoxin] + S-adenosyl-L-homocysteine. It carries out the reaction adenosine(37) in tRNA + 2 reduced [2Fe-2S]-[ferredoxin] + 2 S-adenosyl-L-methionine = 2-methyladenosine(37) in tRNA + 5'-deoxyadenosine + L-methionine + 2 oxidized [2Fe-2S]-[ferredoxin] + S-adenosyl-L-homocysteine. In terms of biological role, specifically methylates position 2 of adenine 2503 in 23S rRNA and position 2 of adenine 37 in tRNAs. m2A2503 modification seems to play a crucial role in the proofreading step occurring at the peptidyl transferase center and thus would serve to optimize ribosomal fidelity. The polypeptide is Dual-specificity RNA methyltransferase RlmN (Legionella pneumophila (strain Paris)).